Here is a 204-residue protein sequence, read N- to C-terminus: Large ribosomal subunit protein eL15y (204 aa).

Positions 162 to 204 are disordered; that stretch reads RGLTSEGKKNRGLRGKGHNNHKNRPSRRATWKKNNSISLRRYR. Residues 171 to 192 show a composition bias toward basic residues; sequence NRGLRGKGHNNHKNRPSRRATW. The span at 193-204 shows a compositional bias: polar residues; it reads KKNNSISLRRYR.

The protein belongs to the eukaryotic ribosomal protein eL15 family.

This Arabidopsis thaliana (Mouse-ear cress) protein is Large ribosomal subunit protein eL15y (RPL15B).